The primary structure comprises 532 residues: Arginine--tRNA ligase (532 aa).

Positions 122-132 (ANPTGPLHVAS) match the 'HIGH' region motif.

Belongs to the class-I aminoacyl-tRNA synthetase family. As to quaternary structure, monomer.

It localises to the cytoplasm. It carries out the reaction tRNA(Arg) + L-arginine + ATP = L-arginyl-tRNA(Arg) + AMP + diphosphate. In Elusimicrobium minutum (strain Pei191), this protein is Arginine--tRNA ligase.